The chain runs to 329 residues: Beta-tectorin (329 aa).

A signal peptide spans 1–17 (MVVRAFVLLALFAEASA). Residues 19–283 (SCTPNKADVI…LSCPVNCDKR (265 aa)) form the ZP domain. N-linked (GlcNAc...) asparagine glycosylation is found at Asn-80, Asn-104, Asn-116, and Asn-145. The cysteines at positions 204 and 264 are disulfide-linked. The GPI-anchor amidated alanine moiety is linked to residue Ala-305. The propeptide at 306-329 (FSGLCDFSDVLLHLILMLGTWAVL) is removed in mature form.

As to quaternary structure, may form homomeric filament after self-association or heteromeric filament after association with alpha-tectorin. Interacts with CEACAM16. The presence of a hydrophobic C-terminus preceded by a potential cleavage site strongly suggests that tectorins are synthesized as glycosylphosphatidylinositol-linked, membrane-bound precursors. Tectorins are targeted to the apical surface of the inner ear epithelia by the lipid and proteolytically released into the extracellular compartment.

It is found in the cell membrane. It localises to the secreted. The protein resides in the extracellular space. Its subcellular location is the extracellular matrix. One of the major non-collagenous components of the tectorial membrane. The tectorial membrane is an extracellular matrix of the inner ear that covers the neuroepithelium of the cochlea and contacts the stereocilia bundles of specialized sensory hair cells. Sound induces movement of these hair cells relative to the tectorial membrane, deflects the stereocilia and leads to fluctuations in hair-cell membrane potential, transducing sound into electrical signals. This is Beta-tectorin (Tectb) from Mus musculus (Mouse).